The primary structure comprises 513 residues: Light-independent protochlorophyllide reductase subunit B (513 aa).

Aspartate 36 is a binding site for [4Fe-4S] cluster. Aspartate 299 (proton donor) is an active-site residue. 434–435 contacts substrate; it reads GM.

The protein belongs to the ChlB/BchB/BchZ family. Protochlorophyllide reductase is composed of three subunits; ChlL, ChlN and ChlB. Forms a heterotetramer of two ChlB and two ChlN subunits. [4Fe-4S] cluster is required as a cofactor.

The protein resides in the plastid. Its subcellular location is the chloroplast. The enzyme catalyses chlorophyllide a + oxidized 2[4Fe-4S]-[ferredoxin] + 2 ADP + 2 phosphate = protochlorophyllide a + reduced 2[4Fe-4S]-[ferredoxin] + 2 ATP + 2 H2O. It functions in the pathway porphyrin-containing compound metabolism; chlorophyll biosynthesis (light-independent). Its function is as follows. Component of the dark-operative protochlorophyllide reductase (DPOR) that uses Mg-ATP and reduced ferredoxin to reduce ring D of protochlorophyllide (Pchlide) to form chlorophyllide a (Chlide). This reaction is light-independent. The NB-protein (ChlN-ChlB) is the catalytic component of the complex. The polypeptide is Light-independent protochlorophyllide reductase subunit B (Marchantia polymorpha (Common liverwort)).